The chain runs to 252 residues: Probable transcriptional regulatory protein RT0442 (252 aa).

The disordered stretch occupies residues 1 to 22 (MSGHSKFKNIQHRKGAQDKKKS).

The protein belongs to the TACO1 family.

It is found in the cytoplasm. The protein is Probable transcriptional regulatory protein RT0442 of Rickettsia typhi (strain ATCC VR-144 / Wilmington).